The primary structure comprises 185 residues: Elongation factor P (185 aa).

Belongs to the elongation factor P family.

Its subcellular location is the cytoplasm. The protein operates within protein biosynthesis; polypeptide chain elongation. Its function is as follows. Involved in peptide bond synthesis. Stimulates efficient translation and peptide-bond synthesis on native or reconstituted 70S ribosomes in vitro. Probably functions indirectly by altering the affinity of the ribosome for aminoacyl-tRNA, thus increasing their reactivity as acceptors for peptidyl transferase. This is Elongation factor P from Brevibacillus brevis (strain 47 / JCM 6285 / NBRC 100599).